A 478-amino-acid chain; its full sequence is Isoeugenol monooxygenase (478 aa).

Fe cation contacts are provided by histidine 167, histidine 218, histidine 282, and histidine 471.

It belongs to the carotenoid oxygenase family. Fe(2+) is required as a cofactor.

The enzyme catalyses (E)-isoeugenol + O2 = vanillin + acetaldehyde. With respect to regulation, inhibited by Co(2+), Ni(2+) and Zn(2+), which may inhibit enzyme activity by replacing iron in the catalytic residues. Inhibited by incubation with high concentrations of the iron chelators 1,10-phenanthroline and Tiron. However, iron is not completely removed by the chelators, suggesting that iron is tightly bound to the enzyme. Involved in isoeugenol degradation. Catalyzes the oxidative cleavage of the side chain double-bond of isoeugenol to form vanillin and acetaldehyde. The protein is Isoeugenol monooxygenase of Pseudomonas nitroreducens.